The sequence spans 211 residues: Large ribosomal subunit protein uL3 (211 aa).

Position 150 is an N5-methylglutamine (Q150).

It belongs to the universal ribosomal protein uL3 family. Part of the 50S ribosomal subunit. Forms a cluster with proteins L14 and L19. In terms of processing, methylated by PrmB.

In terms of biological role, one of the primary rRNA binding proteins, it binds directly near the 3'-end of the 23S rRNA, where it nucleates assembly of the 50S subunit. The sequence is that of Large ribosomal subunit protein uL3 from Pseudomonas entomophila (strain L48).